Consider the following 181-residue polypeptide: ATP synthase subunit b (181 aa).

A helical membrane pass occupies residues 23–43 (FIHIPTFIYTALNLVILYFIL).

Belongs to the ATPase B chain family. F-type ATPases have 2 components, F(1) - the catalytic core - and F(0) - the membrane proton channel. F(1) has five subunits: alpha(3), beta(3), gamma(1), delta(1), epsilon(1). F(0) has three main subunits: a(1), b(2) and c(10-14). The alpha and beta chains form an alternating ring which encloses part of the gamma chain. F(1) is attached to F(0) by a central stalk formed by the gamma and epsilon chains, while a peripheral stalk is formed by the delta and b chains.

It localises to the cell membrane. In terms of biological role, f(1)F(0) ATP synthase produces ATP from ADP in the presence of a proton or sodium gradient. F-type ATPases consist of two structural domains, F(1) containing the extramembraneous catalytic core and F(0) containing the membrane proton channel, linked together by a central stalk and a peripheral stalk. During catalysis, ATP synthesis in the catalytic domain of F(1) is coupled via a rotary mechanism of the central stalk subunits to proton translocation. Functionally, component of the F(0) channel, it forms part of the peripheral stalk, linking F(1) to F(0). The polypeptide is ATP synthase subunit b (Acetivibrio thermocellus (strain ATCC 27405 / DSM 1237 / JCM 9322 / NBRC 103400 / NCIMB 10682 / NRRL B-4536 / VPI 7372) (Clostridium thermocellum)).